We begin with the raw amino-acid sequence, 534 residues long: Calmodulin calcium-dependent NAD kinase (534 aa).

The tract at residues glutamine 167–arginine 196 is calmodulin-binding. An ATP-binding site is contributed by glycine 238–serine 245.

Interacts with calmodulin (CaM) in a calcium Ca(2+)-dependent manner in vitro. Ca(2+) is required as a cofactor.

It localises to the mitochondrion outer membrane. It carries out the reaction NAD(+) + ATP = ADP + NADP(+) + H(+). Its function is as follows. Phosphorylates NAD(+) to produce NADP(+) in a calmodulin calcium-dependent manner. Does not possess activity toward NADH. Has broad specificity for the phosphoryl donor, as ATP, CTP, GTP and UTP can be used interchangeably and produce similar efficiencies. May play a role in producing NADP(H) needed to regulate the elicitor-induced reactive oxygen species (ROS) burst by sustaining the activity of NADPH oxidases. Does not seem to play a role in photosynthesis-driven growth. The sequence is that of Calmodulin calcium-dependent NAD kinase from Arabidopsis thaliana (Mouse-ear cress).